The primary structure comprises 670 residues: DNA ligase (670 aa).

NAD(+) contacts are provided by residues 34–38 (DAEYD), 83–84 (SL), and glutamate 112. The active-site N6-AMP-lysine intermediate is lysine 114. NAD(+)-binding residues include arginine 135, glutamate 169, lysine 285, and lysine 309. Zn(2+)-binding residues include cysteine 403, cysteine 406, cysteine 421, and cysteine 426. The BRCT domain occupies 589–670 (PASSVLAGKT…FLQEISREEQ (82 aa)).

The protein belongs to the NAD-dependent DNA ligase family. LigA subfamily. It depends on Mg(2+) as a cofactor. Mn(2+) serves as cofactor.

It carries out the reaction NAD(+) + (deoxyribonucleotide)n-3'-hydroxyl + 5'-phospho-(deoxyribonucleotide)m = (deoxyribonucleotide)n+m + AMP + beta-nicotinamide D-nucleotide.. In terms of biological role, DNA ligase that catalyzes the formation of phosphodiester linkages between 5'-phosphoryl and 3'-hydroxyl groups in double-stranded DNA using NAD as a coenzyme and as the energy source for the reaction. It is essential for DNA replication and repair of damaged DNA. The protein is DNA ligase of Geobacillus thermodenitrificans (strain NG80-2).